The following is a 91-amino-acid chain: Cell division protein FtsB (91 aa).

Residues 1–3 (MKF) are Cytoplasmic-facing. A helical membrane pass occupies residues 4–21 (IVGLLLVLLLALQYQLWI). Over 22–91 (SKDGLGELRQ…ETFFQVVEEP (70 aa)) the chain is Periplasmic. Residues 26 to 74 (LGELRQLSRSIKQQRHENATLIERNQVLKAEVQDLKSGLDALEERARSG) are a coiled coil.

This sequence belongs to the FtsB family. In terms of assembly, part of a complex composed of FtsB, FtsL and FtsQ.

It localises to the cell inner membrane. Essential cell division protein. May link together the upstream cell division proteins, which are predominantly cytoplasmic, with the downstream cell division proteins, which are predominantly periplasmic. This Nitrosococcus oceani (strain ATCC 19707 / BCRC 17464 / JCM 30415 / NCIMB 11848 / C-107) protein is Cell division protein FtsB.